The following is a 285-amino-acid chain: MKFVIVTGLSGSGKSETMRALEDMGFYCVDNLPPALITKFAELCYQPNSSIDKVALGIDIRGRKFFEALHESLNYLEKENYEYEMVYLDCNDDVLLKRYKMTRRNHPLAKDMQIPEGIKMERKIMEPLKELSTCIIDTTNMKPKDLKEEIKKIYSSGEDNPNLTISVVSFGFKHGILADADLVFDVRFLPNPYYVEELRAKTGDDKEVRDYVMNSKISEEFYVKLLDMIHFLVPQYIEEGKQHLVIGVGCTGGRHRSVTITNLIAEDLSNKGYRVVKKHRDSMLR.

8–15 (GLSGSGKS) serves as a coordination point for ATP. GTP is bound at residue 59 to 62 (DIRG).

This sequence belongs to the RapZ-like family.

In terms of biological role, displays ATPase and GTPase activities. The sequence is that of Nucleotide-binding protein CD630_34000 from Clostridioides difficile (strain 630) (Peptoclostridium difficile).